Reading from the N-terminus, the 199-residue chain is Superoxide dismutase [Fe] (199 aa).

Positions 27, 79, 161, and 165 each coordinate Fe cation.

Belongs to the iron/manganese superoxide dismutase family. As to quaternary structure, homodimer. Fe cation is required as a cofactor.

The enzyme catalyses 2 superoxide + 2 H(+) = H2O2 + O2. In terms of biological role, destroys superoxide anion radicals which are normally produced within the cells and which are toxic to biological systems. This is Superoxide dismutase [Fe] (sodB) from Synechocystis sp. (strain ATCC 27184 / PCC 6803 / Kazusa).